A 620-amino-acid chain; its full sequence is Translation initiation factor IF-2 (620 aa).

The tr-type G domain maps to 119–288; it reads ERPPIVTIMG…IILISELENL (170 aa). The G1 stretch occupies residues 128-135; it reads GHVDHGKT. 128-135 lines the GTP pocket; the sequence is GHVDHGKT. The tract at residues 153-157 is G2; the sequence is GITQA. The tract at residues 175 to 178 is G3; sequence DTPG. Residues 175–179 and 229–232 each bind GTP; these read DTPGH and NKID. The G4 stretch occupies residues 229–232; it reads NKID. The tract at residues 265-267 is G5; sequence SAI.

Belongs to the TRAFAC class translation factor GTPase superfamily. Classic translation factor GTPase family. IF-2 subfamily.

Its subcellular location is the cytoplasm. Its function is as follows. One of the essential components for the initiation of protein synthesis. Protects formylmethionyl-tRNA from spontaneous hydrolysis and promotes its binding to the 30S ribosomal subunits. Also involved in the hydrolysis of GTP during the formation of the 70S ribosomal complex. This is Translation initiation factor IF-2 from Mycoplasma mycoides subsp. mycoides SC (strain CCUG 32753 / NCTC 10114 / PG1).